Reading from the N-terminus, the 395-residue chain is Probable protein arginine N-methyltransferase 6.2 (395 aa).

Over residues 1–11 (MFAGGADGGNG) the composition is skewed to gly residues. The disordered stretch occupies residues 1–37 (MFAGGADGGNGHLPRPRRARRGGGGGGGMGSPPLGPP). The SAM-dependent MTase PRMT-type domain maps to 45-390 (DMAYFKAYSH…YFTRDQWYVK (346 aa)). S-adenosyl-L-methionine is bound by residues H58, R67, G91, D113, and E142. Residues E156 and E165 contribute to the active site. The disordered stretch occupies residues 300-324 (KKQANQCLDGNTQDASPSNKKKKAD). Positions 302–317 (QANQCLDGNTQDASPS) are enriched in polar residues.

This sequence belongs to the class I-like SAM-binding methyltransferase superfamily. Protein arginine N-methyltransferase family. PRMT6 subfamily.

Functionally, arginine methyltransferase that can both catalyze the formation of omega-N monomethylarginine (MMA) and asymmetrical dimethylarginine (aDMA). The protein is Probable protein arginine N-methyltransferase 6.2 (PRMT6.2) of Oryza sativa subsp. indica (Rice).